Reading from the N-terminus, the 143-residue chain is Nucleoside diphosphate kinase (143 aa).

Positions 11, 59, 87, 93, 104, and 114 each coordinate ATP. The active-site Pros-phosphohistidine intermediate is His-117.

It belongs to the NDK family. As to quaternary structure, homotetramer. It depends on Mg(2+) as a cofactor.

The protein localises to the cytoplasm. It carries out the reaction dZDP + ATP = dZTP + ADP. The catalysed reaction is a 2'-deoxyribonucleoside 5'-diphosphate + ATP = a 2'-deoxyribonucleoside 5'-triphosphate + ADP. The enzyme catalyses a ribonucleoside 5'-diphosphate + ATP = a ribonucleoside 5'-triphosphate + ADP. It participates in purine metabolism. Major role in the synthesis of nucleoside triphosphates other than ATP. The ATP gamma phosphate is transferred to the NDP beta phosphate via a ping-pong mechanism, using a phosphorylated active-site intermediate. In terms of biological role, (Microbial infection) Catalyzes the phosphorylation of dZDP to dZTP, when the bacterium is infected by a phage that produces the substrate for the synthesis of dZTP (2- amino-2'-deoxyadenosine 5'-triphosphate), which is then used by the phage as a DNA polymerase substrate. The sequence is that of Nucleoside diphosphate kinase from Salmonella paratyphi C (strain RKS4594).